A 335-amino-acid polypeptide reads, in one-letter code: Holliday junction branch migration complex subunit RuvB (335 aa).

The tract at residues 4–184 (ADRIISSNAQ…FGIVQRLEFY (181 aa)) is large ATPase domain (RuvB-L). ATP is bound by residues Ile23, Arg24, Gly65, Lys68, Thr69, Thr70, 131–133 (EDY), Arg174, Tyr184, and Arg221. A Mg(2+)-binding site is contributed by Thr69. The tract at residues 185–255 (SVEDLTSIVA…IAKSALSMLD (71 aa)) is small ATPAse domain (RuvB-S). The segment at 258-335 (QAGFDYLDRK…RHFGLDKLTE (78 aa)) is head domain (RuvB-H). DNA-binding residues include Arg294, Arg313, and Arg318.

This sequence belongs to the RuvB family. In terms of assembly, homohexamer. Forms an RuvA(8)-RuvB(12)-Holliday junction (HJ) complex. HJ DNA is sandwiched between 2 RuvA tetramers; dsDNA enters through RuvA and exits via RuvB. An RuvB hexamer assembles on each DNA strand where it exits the tetramer. Each RuvB hexamer is contacted by two RuvA subunits (via domain III) on 2 adjacent RuvB subunits; this complex drives branch migration. In the full resolvosome a probable DNA-RuvA(4)-RuvB(12)-RuvC(2) complex forms which resolves the HJ.

Its subcellular location is the cytoplasm. It carries out the reaction ATP + H2O = ADP + phosphate + H(+). The RuvA-RuvB-RuvC complex processes Holliday junction (HJ) DNA during genetic recombination and DNA repair, while the RuvA-RuvB complex plays an important role in the rescue of blocked DNA replication forks via replication fork reversal (RFR). RuvA specifically binds to HJ cruciform DNA, conferring on it an open structure. The RuvB hexamer acts as an ATP-dependent pump, pulling dsDNA into and through the RuvAB complex. RuvB forms 2 homohexamers on either side of HJ DNA bound by 1 or 2 RuvA tetramers; 4 subunits per hexamer contact DNA at a time. Coordinated motions by a converter formed by DNA-disengaged RuvB subunits stimulates ATP hydrolysis and nucleotide exchange. Immobilization of the converter enables RuvB to convert the ATP-contained energy into a lever motion, pulling 2 nucleotides of DNA out of the RuvA tetramer per ATP hydrolyzed, thus driving DNA branch migration. The RuvB motors rotate together with the DNA substrate, which together with the progressing nucleotide cycle form the mechanistic basis for DNA recombination by continuous HJ branch migration. Branch migration allows RuvC to scan DNA until it finds its consensus sequence, where it cleaves and resolves cruciform DNA. The protein is Holliday junction branch migration complex subunit RuvB of Mannheimia succiniciproducens (strain KCTC 0769BP / MBEL55E).